Consider the following 60-residue polypeptide: Large ribosomal subunit protein uL30 (60 aa).

This sequence belongs to the universal ribosomal protein uL30 family. As to quaternary structure, part of the 50S ribosomal subunit.

The polypeptide is Large ribosomal subunit protein uL30 (Moorella thermoacetica (strain ATCC 39073 / JCM 9320)).